Reading from the N-terminus, the 297-residue chain is tRNA dimethylallyltransferase (297 aa).

15–22 (GPTASGKS) contacts ATP. Substrate is bound at residue 17-22 (TASGKS). Interaction with substrate tRNA regions lie at residues 40 to 43 (DSMQ) and 164 to 168 (QRIVR).

The protein belongs to the IPP transferase family. In terms of assembly, monomer. Mg(2+) serves as cofactor.

It carries out the reaction adenosine(37) in tRNA + dimethylallyl diphosphate = N(6)-dimethylallyladenosine(37) in tRNA + diphosphate. Functionally, catalyzes the transfer of a dimethylallyl group onto the adenine at position 37 in tRNAs that read codons beginning with uridine, leading to the formation of N6-(dimethylallyl)adenosine (i(6)A). The chain is tRNA dimethylallyltransferase from Rhizobium leguminosarum bv. trifolii (strain WSM2304).